The following is a 217-amino-acid chain: Protein MODIFYING WALL LIGNIN-2 (217 aa).

Positions 1–23 are cleaved as a signal peptide; that stretch reads MHNLFLYSVVFSLGLVSFITCFA. Residues 24–51 lie on the Cytoplasmic side of the membrane; sequence AEFKRTQKEDIRWDTERNCYVPGSHAFG. Residues 52-72 traverse the membrane as a helical segment; sequence LGSAAVLCFCLAQIVGNIVVF. Topologically, residues 73-94 are extracellular; the sequence is RNHRTRTKREDGYKITDLTLPT. Residues 95-115 form a helical membrane-spanning segment; the sequence is VLLLLSWSNFVVVVLILSTAI. Over 116–137 the chain is Cytoplasmic; sequence SMSRAQAYGEGWLDEDCYLVKD. Residues 138-158 form a helical membrane-spanning segment; it reads GVFAASGCLAILGLGALTISA. The Extracellular segment spans residues 159–217; that stretch reads TRIKVKKQQQLVQVVIKDQNQDQRRSMEEEQKHDEHQTNKSESVIHLVEEVSSTNISRI. N-linked (GlcNAc...) asparagine glycans are attached at residues N197 and N213.

It belongs to the DESIGUAL family.

It is found in the cell membrane. Functionally, together with MWL1, contributes to secondary cell wall biology, specifically lignin biosynthesis. This Arabidopsis thaliana (Mouse-ear cress) protein is Protein MODIFYING WALL LIGNIN-2.